We begin with the raw amino-acid sequence, 121 residues long: MIQPQSFLNVADNSGARKLMCIRVLGGGNQSANIGNIIIAVVKDAIPNTAFKKSDIVRAVIVRTKKGIKRENGMTIRFDDNAAVVINKEGNPRGTRVFGPIARELRDQNLTKILSLAPEVV.

It belongs to the universal ribosomal protein uL14 family. In terms of assembly, part of the 50S ribosomal subunit.

The protein resides in the plastid. The protein localises to the chloroplast. Its function is as follows. Binds to 23S rRNA. In Oedogonium cardiacum (Filamentous green alga), this protein is Large ribosomal subunit protein uL14c.